A 225-amino-acid polypeptide reads, in one-letter code: MVDNKQNVVAEFKLVLVGDGGVGKTTFVTRHQTGEFEKRYIATQGVNVSNMVLYTTKGPIRFNIWDTAGQEKLGGLREGYYIGANAAIMMFDVTSRITYKNIPKWHKDLTRICENIPIVLVGNKVDSKDRKVKARQITFHRKRSLQYYDVSAKSNYQYEKPFLWILRKLTGDPTLNLVEGIALVAPDTEHVMTEDQIKQLEMEQAEAMNLAQQGVLPDDEDDEFN.

Residues 8–172 form the Small GTPase Ran-type domain; sequence VVAEFKLVLV…LWILRKLTGD (165 aa). Position 19–26 (19–26) interacts with GTP; sequence DGGVGKTT. Positions 38-46 are switch-I; it reads KRYIATQGV. GTP-binding positions include Gly69, 123-126, and 151-153; these read NKVD and SAK. Positions 69–85 are switch-II; sequence GQEKLGGLREGYYIGAN.

This sequence belongs to the small GTPase superfamily. Ran family. In terms of assembly, monomer. Found in a nuclear export complex with RanGTP, exportin and pre-miRNA.

It is found in the nucleus. Functionally, GTP-binding protein involved in nucleocytoplasmic transport. Required for the import of protein into the nucleus and also for RNA export. Involved in chromatin condensation and control of cell cycle. The polypeptide is GTP-binding nuclear protein Ran (Tetrahymena thermophila).